The primary structure comprises 40 residues: Meleagrin (40 aa).

A Pyrrolidone carboxylic acid modification is found at Gln-1. Cystine bridges form between Cys-6–Cys-33, Cys-12–Cys-28, and Cys-16–Cys-32.

This sequence belongs to the transferrin family.

The chain is Meleagrin from Meleagris gallopavo (Wild turkey).